The chain runs to 248 residues: MSFVVIIPARYASTRLPGKPLVDINGKPMIVHVLERARESGAERIIVATDHEDVARAVEAAGGEVCMTRADHQSGTERLAEVVEKCAFSDDTVIVNVQGDEPMIPATIIRQVADNLAQRQVGMATLAVPIHNAEEAFNPNAVKVVLDAEGYALYFSRATIPWDRDRFAKGLETVGDNFLRHLGIYGYRAGFIRRYVTWQPSPLEHIEMLEQLRVLWYGEKIHVAVAHEVPGTGVDTPEDLERVRAEMR.

This sequence belongs to the KdsB family. Mg(2+) is required as a cofactor.

It is found in the cytoplasm. The enzyme catalyses 3-deoxy-alpha-D-manno-oct-2-ulosonate + CTP = CMP-3-deoxy-beta-D-manno-octulosonate + diphosphate. The protein operates within nucleotide-sugar biosynthesis; CMP-3-deoxy-D-manno-octulosonate biosynthesis; CMP-3-deoxy-D-manno-octulosonate from 3-deoxy-D-manno-octulosonate and CTP: step 1/1. It functions in the pathway bacterial outer membrane biogenesis; lipopolysaccharide biosynthesis. Activates KDO (a required 8-carbon sugar) for incorporation into bacterial lipopolysaccharide in Gram-negative bacteria. This Escherichia coli O157:H7 protein is 3-deoxy-manno-octulosonate cytidylyltransferase.